The following is a 213-amino-acid chain: ATP-dependent Clp protease proteolytic subunit (213 aa).

Serine 114 functions as the Nucleophile in the catalytic mechanism. Histidine 139 is an active-site residue.

It belongs to the peptidase S14 family. Fourteen ClpP subunits assemble into 2 heptameric rings which stack back to back to give a disk-like structure with a central cavity, resembling the structure of eukaryotic proteasomes.

It is found in the cytoplasm. It carries out the reaction Hydrolysis of proteins to small peptides in the presence of ATP and magnesium. alpha-casein is the usual test substrate. In the absence of ATP, only oligopeptides shorter than five residues are hydrolyzed (such as succinyl-Leu-Tyr-|-NHMec, and Leu-Tyr-Leu-|-Tyr-Trp, in which cleavage of the -Tyr-|-Leu- and -Tyr-|-Trp bonds also occurs).. Functionally, cleaves peptides in various proteins in a process that requires ATP hydrolysis. Has a chymotrypsin-like activity. Plays a major role in the degradation of misfolded proteins. This Methylobacillus flagellatus (strain ATCC 51484 / DSM 6875 / VKM B-1610 / KT) protein is ATP-dependent Clp protease proteolytic subunit.